A 63-amino-acid polypeptide reads, in one-letter code: Large ribosomal subunit protein uL30 (63 aa).

Belongs to the universal ribosomal protein uL30 family. Part of the 50S ribosomal subunit.

The protein is Large ribosomal subunit protein uL30 of Bradyrhizobium sp. (strain BTAi1 / ATCC BAA-1182).